The primary structure comprises 1119 residues: G8 domain-containing protein DDB_G0288475 (1119 aa).

Positions 1–22 (MKYSSFLLLFIYIFFILNNINA) are cleaved as a signal peptide. Positions 276–404 (TIWTSGVVPL…YHNTWTKLAA (129 aa)) constitute a G8 domain. 8 N-linked (GlcNAc...) asparagine glycosylation sites follow: Asn-308, Asn-559, Asn-736, Asn-854, Asn-968, Asn-1035, Asn-1056, and Asn-1070.

It belongs to the comF family.

The protein resides in the secreted. This Dictyostelium discoideum (Social amoeba) protein is G8 domain-containing protein DDB_G0288475.